A 495-amino-acid chain; its full sequence is Probable biotin-dependent acyl-coenzyme A carboxylase beta3 subunit (495 aa).

The CoA carboxyltransferase N-terminal domain occupies 1–236 (MSRITTDQLR…PLPAPQTPAP (236 aa)). Positions 242 to 470 (TWDSVVASRR…SNAIAAEVHA (229 aa)) constitute a CoA carboxyltransferase C-terminal domain.

The protein belongs to the AccD/PCCB family. In terms of assembly, the biotin-dependent acyl-CoA carboxylase complex is composed of an AccA protein, which contains the biotin carboxylase (BC) and biotin carboxyl carrier protein (BCCP) domains, and an AccD protein, which contains the carboxyl transferase (CT) domain.

In terms of biological role, component of a biotin-dependent acyl-CoA carboxylase complex. This subunit transfers the CO2 from carboxybiotin to the CoA ester substrate. This is Probable biotin-dependent acyl-coenzyme A carboxylase beta3 subunit (accD3) from Mycobacterium bovis (strain ATCC BAA-935 / AF2122/97).